The primary structure comprises 161 residues: Cell division control protein 31 (161 aa).

4 consecutive EF-hand domains span residues 20-55, 56-91, 93-128, and 129-161; these read EQKQ…LGFE, LPKR…KILK, DPLD…LGET, and LTDE…CTDS. Residues Asp33, Asn35, Asp37, and Glu44 each contribute to the Ca(2+) site. The residue at position 130 (Thr130) is a Phosphothreonine. Ca(2+)-binding residues include Asp142, Asp144, Asp146, Glu148, and Glu153.

It belongs to the centrin family. As to quaternary structure, component of the spindle pole body (SPB), acting as the connector of microtubule arrays in the cytoplasm and the nucleoplasm, is involved in nuclear positioning before chromosome segregation, SPB separation, spindle formation, chromosome segregation, nuclear migration into the bud, nuclear reorientation after cytokinesis and nuclear fusion during conjugation. The SPB half-bridge, which is tightly associated with the cytoplasmic side of the nuclear envelope and the SPB, is playing a key role as the starting structure for and in the initiation of SPB duplication in G1. At the SPB half-bridge CDC31 interacts with KAR1, MPS3 and SFI1. Interacts with KIC1. Interacts with VPS13. Associates with nuclear pore complexes (NPCs).

Its subcellular location is the nucleus envelope. The protein resides in the cytoplasm. The protein localises to the cytoskeleton. It localises to the microtubule organizing center. It is found in the spindle pole body. Functionally, functions as a component of the spindle pole body (SPB) half-bridge. At the SPB, it is recruited by KAR1 and MPS3 to the SPB half-bridge and involved in the initial steps of SPB duplication. Also involved in connection with the protein kinase KIC1 in the maintenance of cell morphology and integrity. May play a role in vesicle-mediated transport, in a VPS13-dependent manner. This chain is Cell division control protein 31 (CDC31), found in Saccharomyces cerevisiae (strain ATCC 204508 / S288c) (Baker's yeast).